The following is a 486-amino-acid chain: Palmitoyltransferase pfa5 (486 aa).

2 consecutive transmembrane segments (helical) span residues 12-32 (AVARVIPVVLFGIIIYSCYVI) and 54-74 (VGAGAAILVVFYILLLFVIIT). Residues 94 to 130 (AADQQSTPAKRSKSRSRRKGHGHGHRKSKSDEVSDKP) form a disordered region. Positions 103–121 (KRSKSRSRRKGHGHGHRKS) are enriched in basic residues. In terms of domain architecture, DHHC spans 172 to 222 (IYCSKCCHYKPDRTHHCREVDRCVRKMDHFCPWVGGVVSETSFKFFIQFVF). 2 helical membrane-spanning segments follow: residues 217-237 (FIQFVFYTALFCMTVLIVCAI) and 261-281 (LVMLTLIGLSDSLQLAAFNLT). Disordered stretches follow at residues 326–357 (PVPPPLSGMPTQPATGEGDNPYSPPPVPSTDP) and 433–486 (KDAA…TGTT). Residues 447 to 456 (SSYNSSPSAP) show a composition bias toward low complexity. The span at 460–480 (RSKRKQKRGKHHHHHHHHRHS) shows a compositional bias: basic residues.

Belongs to the DHHC palmitoyltransferase family. PFA5 subfamily. Autopalmitoylated.

It localises to the membrane. The catalysed reaction is L-cysteinyl-[protein] + hexadecanoyl-CoA = S-hexadecanoyl-L-cysteinyl-[protein] + CoA. The protein is Palmitoyltransferase pfa5 (pfa5) of Emericella nidulans (strain FGSC A4 / ATCC 38163 / CBS 112.46 / NRRL 194 / M139) (Aspergillus nidulans).